Here is a 296-residue protein sequence, read N- to C-terminus: Light-independent protochlorophyllide reductase iron-sulfur ATP-binding protein (296 aa).

ATP-binding positions include 39-44 and K68; that span reads GIGKST. S43 lines the Mg(2+) pocket. Residues C124 and C158 each contribute to the [4Fe-4S] cluster site. Position 209–210 (209–210) interacts with ATP; that stretch reads NR.

This sequence belongs to the NifH/BchL/ChlL family. Homodimer. Protochlorophyllide reductase is composed of three subunits; ChlL, ChlN and ChlB. Requires [4Fe-4S] cluster as cofactor.

The catalysed reaction is chlorophyllide a + oxidized 2[4Fe-4S]-[ferredoxin] + 2 ADP + 2 phosphate = protochlorophyllide a + reduced 2[4Fe-4S]-[ferredoxin] + 2 ATP + 2 H2O. Its pathway is porphyrin-containing compound metabolism; chlorophyll biosynthesis (light-independent). Component of the dark-operative protochlorophyllide reductase (DPOR) that uses Mg-ATP and reduced ferredoxin to reduce ring D of protochlorophyllide (Pchlide) to form chlorophyllide a (Chlide). This reaction is light-independent. The L component serves as a unique electron donor to the NB-component of the complex, and binds Mg-ATP. The chain is Light-independent protochlorophyllide reductase iron-sulfur ATP-binding protein from Prochlorococcus marinus (strain MIT 9211).